Here is a 508-residue protein sequence, read N- to C-terminus: MRSFLYMLSQRPKLACLCGKSIIIWPGKRTNLPENAFTQRMLQECGQMAKPDASVDLDNFKAISEQSPAEFGIDSCRVKAQPEDRSDRIREQIASAYPVIHERTLLLFISFLEHKLTFGSEQEKAIYKDMTVVDLVQRLLAKRCVWFFGANDYYRTMQGNIGNEGFEAVGTPAEKEPLTLTSVLSYDEIKLSALLYVSCHSEFINNGSRVNGGEVLQNKDTIEREGVVIGLIGARFERPDVMEYQDIMITKTQNTEANGYGFDLEQISSETVTPASDLRRIWREFYEEPRDFIYADTPYDTTRFEEVSQGIFDHQVMRKRYAISFDTLLLEAQDRAFKAGKPAYIHVVGIGLGVWKAARQQERTFLESFEGRLRALGERLSHIGVVHFSWFHLACVGSLHDGAIIPVDKHPQGGIRIRNSVRNPGDKLTEDMLPVVTYAWDGNALPGNEFWANMLISTGDPAAACSTLISELQNPHINVHYMNGANLHIASVEHGLLHVGDYARRLIV.

Residues Arg-209, Gly-349, Gly-351, Gly-353, Val-354, Trp-355, Trp-390, Asp-441, Asn-448, Glu-449, Gly-459, and Asp-460 each contribute to the ADP-D-ribose site.

It carries out the reaction N(omega)-(ADP-D-ribosyl)-L-arginyl-[protein] + H2O = ADP-D-ribose + L-arginyl-[protein]. It catalyses the reaction N(omega)-(ADP-D-ribosyl)-L-arginine + H2O = ADP-D-ribose + L-arginine. Functionally, protein ADP-ribosyl hydrolase that specifically removes mono-ADP-ribosyl modifications from protein arginine residues. The sequence is that of ADP-ribosylarginine hydrolase CG3568 from Drosophila melanogaster (Fruit fly).